Here is a 405-residue protein sequence, read N- to C-terminus: Phosphopentomutase (405 aa).

Residues Asp10, Asp305, His310, Asp346, His347, and His358 each coordinate Mn(2+).

The protein belongs to the phosphopentomutase family. It depends on Mn(2+) as a cofactor.

It is found in the cytoplasm. It catalyses the reaction 2-deoxy-alpha-D-ribose 1-phosphate = 2-deoxy-D-ribose 5-phosphate. It carries out the reaction alpha-D-ribose 1-phosphate = D-ribose 5-phosphate. It participates in carbohydrate degradation; 2-deoxy-D-ribose 1-phosphate degradation; D-glyceraldehyde 3-phosphate and acetaldehyde from 2-deoxy-alpha-D-ribose 1-phosphate: step 1/2. Its function is as follows. Isomerase that catalyzes the conversion of deoxy-ribose 1-phosphate (dRib-1-P) and ribose 1-phosphate (Rib-1-P) to deoxy-ribose 5-phosphate (dRib-5-P) and ribose 5-phosphate (Rib-5-P), respectively. This Methylorubrum extorquens (strain CM4 / NCIMB 13688) (Methylobacterium extorquens) protein is Phosphopentomutase.